Consider the following 2412-residue polypeptide: Centrosomal protein of 295 kDa (2412 aa).

The segment at 1-540 (MKRKGMNTKL…KQADQPEVCC (540 aa)) is necessary for centriole targeting and microtubule association. Serine 13 is subject to Phosphoserine. Coiled coils occupy residues 63-84 (AEEL…LEKL), 114-134 (AERK…QKNQ), 209-273 (DAHL…DLAR), 489-535 (RRKQ…QADQ), and 563-592 (HQLL…VLKE). 2 disordered regions span residues 600–641 (SALV…YQPV) and 739–762 (LDSQ…PSPF). Position 634 is a phosphoserine (serine 634). The segment covering 739–757 (LDSQQISSEDSENISSKPS) has biased composition (polar residues). Residues 811–841 (AQQGDLRFLQEQLELQKKVLQARQEAREKLL) adopt a coiled-coil conformation. Disordered stretches follow at residues 871-891 (SASA…ATVS), 973-1005 (DTQS…QDGS), 1158-1178 (LSSP…SVRS), and 1216-1240 (WVDT…QQTG). Composition is skewed to polar residues over residues 993-1005 (PSQS…QDGS), 1158-1176 (LSSP…SVSV), and 1224-1240 (FQSS…QQTG). 2 coiled-coil regions span residues 1300–1327 (QQDS…EAHE) and 1448–1493 (QHDD…SKQI). Phosphoserine is present on serine 1573. Disordered regions lie at residues 1820 to 1895 (LAHD…LSSV), 1916 to 1937 (ESFS…EETD), 2028 to 2048 (DLSS…SESS), and 2089 to 2111 (TEGS…SQHA). A compositionally biased stretch (basic and acidic residues) spans 1836 to 1868 (SKSHDDNAEAVKVKKSDVEDHAVLSHAVSKEEA). Residues 1885 to 1895 (QEISQEPLSSV) are compositionally biased toward polar residues. Basic and acidic residues predominate over residues 1921–1935 (QTEHLEQESTNKQEE). Over residues 2089 to 2108 (TEGSEQSFQQLRPEFSSQES) the composition is skewed to polar residues. The tract at residues 2367 to 2412 (SLQEAFMTRQTLTERSYQRQREIWNKTRLPQTKVSKEKLPTGCTGS) is ALMS motif.

In terms of assembly, interacts (via ALMS motif) with microtubules; this interaction is direct.

The protein resides in the cytoplasm. Its subcellular location is the cytoskeleton. It localises to the microtubule organizing center. The protein localises to the centrosome. It is found in the centriole. The protein resides in the spindle. In terms of biological role, centriole-enriched microtubule-binding protein involved in centriole biogenesis. Essential for the generation of the distal portion of new-born centrioles in a CPAP- and CEP120-mediated elongation dependent manner during the cell cycle S/G2 phase after formation of the initiating cartwheel structure. Required for the recruitment of centriolar proteins, such as POC1B, POC5 and CEP135, into the distal portion of centrioles. Also required for centriole-to-centrosome conversion during mitotic progression, but is dispensable for cartwheel removal or centriole disengagement. Binds to and stabilizes centriolar microtubule. May be involved in ciliogenesis. The protein is Centrosomal protein of 295 kDa of Mus musculus (Mouse).